A 519-amino-acid polypeptide reads, in one-letter code: NAD-dependent histone deacetylase SIR2 (519 aa).

The disordered stretch occupies residues 154–212 (EIDENDNKNDGTNNSDIDSDIDSNSDMDSQSESGELDDAMDVDDSLSENEDEYDQDMST). Acidic residues predominate over residues 187 to 208 (GELDDAMDVDDSLSENEDEYDQ). A Deacetylase sirtuin-type domain is found at 221–486 (MTPFKYKLPD…SYLCKCLKWD (266 aa)). NAD(+)-binding positions include 246 to 265 (GAGISTSLGIPDFRSFKGLY) and 328 to 331 (QNID). The active-site Proton acceptor is histidine 348. Zn(2+) is bound by residues cysteine 356, cysteine 359, cysteine 380, and cysteine 383. NAD(+) is bound by residues 430–432 (GTS), 455–457 (NKD), and cysteine 472.

It belongs to the sirtuin family. Class I subfamily. Interacts with HXK1. Requires Zn(2+) as cofactor.

It is found in the nucleus. The catalysed reaction is N(6)-acetyl-L-lysyl-[protein] + NAD(+) + H2O = 2''-O-acetyl-ADP-D-ribose + nicotinamide + L-lysyl-[protein]. Its function is as follows. NAD-dependent deacetylase. Heterochromatin component that silences transcription at silent mating loci, telomeres and the ribosomal DNA, and that also suppresses recombination in the rDNA and extends replicative life span. It acts as a NAD-dependent histone deacetylase, which deacetylates 'Lys-9' and 'Lys-14' of Histone H3 and 'Lys-16' of Histone H4. Functions in the distribution of oxidatively damaged proteins during cell division. Mediates phenotypic switching. This chain is NAD-dependent histone deacetylase SIR2, found in Candida albicans (strain SC5314 / ATCC MYA-2876) (Yeast).